The primary structure comprises 443 residues: Mitochondrial enolase superfamily member 1 (443 aa).

Substrate-binding positions include 24-26 and tyrosine 34; that span reads GSD. Serine 148 is subject to Phosphoserine. Lysine 220 contacts substrate. The active-site Proton donor/acceptor is the lysine 222. Aspartate 250 contacts Mg(2+). Substrate-binding positions include asparagine 252, glutamate 276, glutamate 305, 355-357, and glutamate 386; that span reads HAG. Mg(2+) is bound by residues glutamate 276 and glutamate 305. The active site involves histidine 355.

Belongs to the mandelate racemase/muconate lactonizing enzyme family. ENOSF1 subfamily. Requires Mg(2+) as cofactor. Could be sumoylated.

Its subcellular location is the mitochondrion. The catalysed reaction is L-fuconate = 2-dehydro-3-deoxy-L-fuconate + H2O. In terms of biological role, plays a role in the catabolism of L-fucose, a sugar that is part of the carbohydrates that are attached to cellular glycoproteins. Catalyzes the dehydration of L-fuconate to 2-keto-3-deoxy-L-fuconate by the abstraction of the 2-proton to generate an enediolate intermediate that is stabilized by the magnesium ion. May down-regulate thymidylate synthase activity, possibly already at the RNA level, by promoting the degradation of TYMS mRNA via an antisense RNA-based mechanism. The sequence is that of Mitochondrial enolase superfamily member 1 (ENOSF1) from Pongo abelii (Sumatran orangutan).